A 544-amino-acid chain; its full sequence is D-2-hydroxyglutarate dehydrogenase, mitochondrial (544 aa).

Residues 1–10 (MMMPRLVPRW) constitute a mitochondrion transit peptide. One can recognise an FAD-binding PCMH-type domain in the interval 119–298 (VRGSSKVLLR…TAVSILCPPK (180 aa)). N6-succinyllysine is present on lysine 124. Residues arginine 409, threonine 413, and lysine 424 each coordinate (R)-2-hydroxyglutarate. Position 409 (arginine 409) interacts with (R)-lactate. (R)-malate-binding residues include arginine 409, threonine 413, and lysine 424. Zn(2+)-binding residues include histidine 457 and histidine 464. Residue asparagine 466 participates in (R)-2-hydroxyglutarate binding. Glutamate 498 lines the Zn(2+) pocket. Residue histidine 499 participates in (R)-2-hydroxyglutarate binding. (R)-lactate is bound at residue histidine 499. A (R)-malate-binding site is contributed by histidine 499.

It belongs to the FAD-binding oxidoreductase/transferase type 4 family. It depends on FAD as a cofactor.

It localises to the mitochondrion. The catalysed reaction is (R)-2-hydroxyglutarate + A = 2-oxoglutarate + AH2. The enzyme catalyses (R)-malate + A = oxaloacetate + AH2. Activated by zinc and cobalt ions. Its function is as follows. Catalyzes the oxidation of D-2-hydroxyglutarate (D-2-HG) to alpha-ketoglutarate. Also catalyzes the oxidation of other D-2-hydroxyacids, such as D-malate (D-MAL) and D-lactate (D-LAC). Exhibits high activities towards D-2-HG and D-MAL but a very weak activity towards D-LAC. This chain is D-2-hydroxyglutarate dehydrogenase, mitochondrial (D2HGDH), found in Bos taurus (Bovine).